A 40-amino-acid chain; its full sequence is Photosystem II reaction center protein T (40 aa).

The chain crosses the membrane as a helical span at residues 3 to 23; the sequence is ALVYTFLLVGTLGIIFFAIFF.

Belongs to the PsbT family. PSII is composed of 1 copy each of membrane proteins PsbA, PsbB, PsbC, PsbD, PsbE, PsbF, PsbH, PsbI, PsbJ, PsbK, PsbL, PsbM, PsbT, PsbY, PsbZ, Psb30/Ycf12, at least 3 peripheral proteins of the oxygen-evolving complex and a large number of cofactors. It forms dimeric complexes.

Its subcellular location is the plastid. It localises to the chloroplast thylakoid membrane. Functionally, found at the monomer-monomer interface of the photosystem II (PS II) dimer, plays a role in assembly and dimerization of PSII. PSII is a light-driven water plastoquinone oxidoreductase, using light energy to abstract electrons from H(2)O, generating a proton gradient subsequently used for ATP formation. This chain is Photosystem II reaction center protein T, found in Anthoceros angustus (Hornwort).